A 314-amino-acid chain; its full sequence is tRNA pseudouridine synthase B (314 aa).

Position 43 (histidine 43) interacts with substrate. The active-site Nucleophile is the aspartate 48. Tyrosine 76, tyrosine 179, and leucine 200 together coordinate substrate.

Belongs to the pseudouridine synthase TruB family. Type 1 subfamily.

The enzyme catalyses uridine(55) in tRNA = pseudouridine(55) in tRNA. Its function is as follows. Responsible for synthesis of pseudouridine from uracil-55 in the psi GC loop of transfer RNAs. This Shigella flexneri protein is tRNA pseudouridine synthase B.